Reading from the N-terminus, the 122-residue chain is Large ribosomal subunit protein uL14 (122 aa).

It belongs to the universal ribosomal protein uL14 family. As to quaternary structure, part of the 50S ribosomal subunit. Forms a cluster with proteins L3 and L19. In the 70S ribosome, L14 and L19 interact and together make contacts with the 16S rRNA in bridges B5 and B8.

Its function is as follows. Binds to 23S rRNA. Forms part of two intersubunit bridges in the 70S ribosome. This is Large ribosomal subunit protein uL14 from Cellvibrio japonicus (strain Ueda107) (Pseudomonas fluorescens subsp. cellulosa).